A 252-amino-acid chain; its full sequence is Ribosomal RNA small subunit methyltransferase J (252 aa).

S-adenosyl-L-methionine-binding positions include 101-102 (RD), 117-118 (ER), 153-154 (SS), and D171.

This sequence belongs to the methyltransferase superfamily. RsmJ family.

The protein localises to the cytoplasm. The catalysed reaction is guanosine(1516) in 16S rRNA + S-adenosyl-L-methionine = N(2)-methylguanosine(1516) in 16S rRNA + S-adenosyl-L-homocysteine + H(+). Specifically methylates the guanosine in position 1516 of 16S rRNA. This Salmonella typhi protein is Ribosomal RNA small subunit methyltransferase J.